The following is a 265-amino-acid chain: uncharacterized protein (265 aa).

A signal peptide spans 1–20 (MSRAMALFFVLCWIQDEIVL). Residues 192–212 (IIAAVSGVAILMAIVLLLLGL) traverse the membrane as a helical segment.

The protein resides in the membrane. This is an uncharacterized protein from Homo sapiens (Human).